We begin with the raw amino-acid sequence, 154 residues long: 6,7-dimethyl-8-ribityllumazine synthase (154 aa).

Residues F26, 60-62 (ALE), and 84-86 (CII) each bind 5-amino-6-(D-ribitylamino)uracil. (2S)-2-hydroxy-3-oxobutyl phosphate is bound at residue 89–90 (ET). Catalysis depends on H92, which acts as the Proton donor. Residue N117 coordinates 5-amino-6-(D-ribitylamino)uracil. (2S)-2-hydroxy-3-oxobutyl phosphate is bound at residue R131.

The protein belongs to the DMRL synthase family.

The catalysed reaction is (2S)-2-hydroxy-3-oxobutyl phosphate + 5-amino-6-(D-ribitylamino)uracil = 6,7-dimethyl-8-(1-D-ribityl)lumazine + phosphate + 2 H2O + H(+). Its pathway is cofactor biosynthesis; riboflavin biosynthesis; riboflavin from 2-hydroxy-3-oxobutyl phosphate and 5-amino-6-(D-ribitylamino)uracil: step 1/2. Its function is as follows. Catalyzes the formation of 6,7-dimethyl-8-ribityllumazine by condensation of 5-amino-6-(D-ribitylamino)uracil with 3,4-dihydroxy-2-butanone 4-phosphate. This is the penultimate step in the biosynthesis of riboflavin. This Acidovorax sp. (strain JS42) protein is 6,7-dimethyl-8-ribityllumazine synthase.